Consider the following 64-residue polypeptide: Enteric beta-defensin (64 aa).

Residues M1–S26 form the signal peptide. 3 disulfides stabilise this stretch: C31/C60, C38/C53, and C43/C61.

Belongs to the beta-defensin family. LAP/TAP subfamily. In terms of tissue distribution, inducibly expressed in enteric epithelial cells.

It localises to the secreted. Has antibacterial activity. This Bos taurus (Bovine) protein is Enteric beta-defensin (EBD).